The chain runs to 503 residues: Probable DNA double-strand break repair helicase HerA (503 aa).

Residues Arg-122, Gly-131–Asn-136, and Lys-478–Ile-479 each bind ATP.

It belongs to the HerA family.

It carries out the reaction Couples ATP hydrolysis with the unwinding of duplex DNA at the replication fork by translocating in the 5'-3' direction. This creates two antiparallel DNA single strands (ssDNA). The leading ssDNA polymer is the template for DNA polymerase III holoenzyme which synthesizes a continuous strand.. The enzyme catalyses ATP + H2O = ADP + phosphate + H(+). The catalysed reaction is Couples ATP hydrolysis with the unwinding of duplex DNA by translocating in the 3'-5' direction.. Its function is as follows. Involved in DNA double-strand break (DSB) repair. Probably acts with NurA to stimulate resection of the 5' strand and produce the long 3' single-strand that is required for RadA loading. Has DNA-dependent ATPase activity and DNA helicase activity. In Methanocaldococcus jannaschii (strain ATCC 43067 / DSM 2661 / JAL-1 / JCM 10045 / NBRC 100440) (Methanococcus jannaschii), this protein is Probable DNA double-strand break repair helicase HerA.